Reading from the N-terminus, the 247-residue chain is Probable transcriptional regulatory protein Syncc9605_2132 (247 aa).

The protein belongs to the TACO1 family.

Its subcellular location is the cytoplasm. The sequence is that of Probable transcriptional regulatory protein Syncc9605_2132 from Synechococcus sp. (strain CC9605).